A 351-amino-acid chain; its full sequence is Ion-translocating oxidoreductase complex subunit D (351 aa).

3 helical membrane passes run 37-57, 88-108, and 123-143; these read YFFG…AILA, AIPP…AIVI, and PAMA…TTWL. Threonine 187 carries the FMN phosphoryl threonine modification. Transmembrane regions (helical) follow at residues 214–234, 241–261, 270–290, and 300–317; these read FAGL…LFLL, WHIP…FAVF, IFNL…TDPV, and LYYG…RSWG.

It belongs to the NqrB/RnfD family. The complex is composed of six subunits: RnfA, RnfB, RnfC, RnfD, RnfE and RnfG. The cofactor is FMN.

It is found in the cell inner membrane. Functionally, part of a membrane-bound complex that couples electron transfer with translocation of ions across the membrane. This Aliivibrio salmonicida (strain LFI1238) (Vibrio salmonicida (strain LFI1238)) protein is Ion-translocating oxidoreductase complex subunit D.